Reading from the N-terminus, the 378-residue chain is Probable protein phosphatase 2C 55 (378 aa).

2 disordered regions span residues 1–59 (MRRH…ASKG) and 79–115 (EGEA…GVGC). The segment covering 7 to 26 (LGLLRRAAASSTSAASSRAG) has biased composition (low complexity). Over residues 92–104 (GGRRGRNSKRQPP) the composition is skewed to basic residues. The region spanning 122–369 (SWGYSSFQGR…DNVTCIVLQF (248 aa)) is the PPM-type phosphatase domain. Residues D158, G159, D321, and D360 each coordinate Mn(2+).

This sequence belongs to the PP2C family. Mg(2+) serves as cofactor. Mn(2+) is required as a cofactor.

The catalysed reaction is O-phospho-L-seryl-[protein] + H2O = L-seryl-[protein] + phosphate. The enzyme catalyses O-phospho-L-threonyl-[protein] + H2O = L-threonyl-[protein] + phosphate. The chain is Probable protein phosphatase 2C 55 from Oryza sativa subsp. japonica (Rice).